Consider the following 96-residue polypeptide: MSAVTRCEDGLVLRLYIQPKASRDSIVGLHGDEVKVAITAPPVDGQANSHLIKFLGKQFRVAKSQIVIEKGELGRHKQVKIIHPQQIPPEIAALTE.

Belongs to the UPF0235 family.

The polypeptide is UPF0235 protein YggU (Salmonella newport (strain SL254)).